The primary structure comprises 368 residues: Histidinol-phosphate aminotransferase (368 aa).

The residue at position 228 (K228) is an N6-(pyridoxal phosphate)lysine.

This sequence belongs to the class-II pyridoxal-phosphate-dependent aminotransferase family. Histidinol-phosphate aminotransferase subfamily. Requires pyridoxal 5'-phosphate as cofactor.

The enzyme catalyses L-histidinol phosphate + 2-oxoglutarate = 3-(imidazol-4-yl)-2-oxopropyl phosphate + L-glutamate. It participates in amino-acid biosynthesis; L-histidine biosynthesis; L-histidine from 5-phospho-alpha-D-ribose 1-diphosphate: step 7/9. This chain is Histidinol-phosphate aminotransferase, found in Methanosarcina mazei (strain ATCC BAA-159 / DSM 3647 / Goe1 / Go1 / JCM 11833 / OCM 88) (Methanosarcina frisia).